Reading from the N-terminus, the 226-residue chain is NAD(P)H-hydrate epimerase (226 aa).

A YjeF N-terminal domain is found at 10–215 (AIELDLDLFE…ALQRKYQLNL (206 aa)). 58 to 62 (NNGGD) serves as a coordination point for (6S)-NADPHX. K(+) contacts are provided by Asn59 and Asp123. Residues 127–133 (GFGFKPP) and Asp156 contribute to the (6S)-NADPHX site. Ser159 lines the K(+) pocket.

It belongs to the NnrE/AIBP family. Requires K(+) as cofactor.

It catalyses the reaction (6R)-NADHX = (6S)-NADHX. The catalysed reaction is (6R)-NADPHX = (6S)-NADPHX. In terms of biological role, catalyzes the epimerization of the S- and R-forms of NAD(P)HX, a damaged form of NAD(P)H that is a result of enzymatic or heat-dependent hydration. This is a prerequisite for the S-specific NAD(P)H-hydrate dehydratase to allow the repair of both epimers of NAD(P)HX. This Drosophila persimilis (Fruit fly) protein is NAD(P)H-hydrate epimerase.